A 413-amino-acid polypeptide reads, in one-letter code: PAB1-binding protein 2 (413 aa).

Positions 1–23 are enriched in low complexity; it reads MSTETTKPSITTTPTTVLVSPNT. Residues 1 to 36 are disordered; sequence MSTETTKPSITTTPTTVLVSPNTLKRKKGEDTSEEQ. 3 KH domains span residues 66-130, 148-213, and 330-394; these read DVHL…YGMI, EISI…TFYI, and FVQQ…IMLI.

Interacts with PAB1.

It localises to the nucleus. This is PAB1-binding protein 2 (PBP2) from Saccharomyces cerevisiae (strain ATCC 204508 / S288c) (Baker's yeast).